The following is a 284-amino-acid chain: RCS-specific HTH-type transcriptional activator RclR (284 aa).

The cysteines at positions 21 and 89 are disulfide-linked. An HTH araC/xylS-type domain is found at 177–278 (PRLGAVIQQM…GCTPGEYRER (102 aa)). 2 consecutive DNA-binding regions (H-T-H motif) follow at residues 197-218 (ESLA…RDVS) and 245-268 (VVVI…VREF).

Oxydation of Cys-21 leads to partial activation of RclR, followed by the formation of an intramolecular disulfide bond between Cys-21 and Cys-89, which stabilizes the active form of RclR. Functionally, involved in reactive chlorine species (RCS) stress resistance. Up-regulates, in response to hypochlorous acid (HOCl), the expression of three genes essential for survival of RCS stress (rclA, rclB and rclC) and its own expression. The polypeptide is RCS-specific HTH-type transcriptional activator RclR (rclR) (Escherichia coli (strain K12)).